We begin with the raw amino-acid sequence, 388 residues long: Formate-dependent phosphoribosylglycinamide formyltransferase (388 aa).

N(1)-(5-phospho-beta-D-ribosyl)glycinamide-binding positions include 15-16 (EL) and E75. ATP-binding positions include R107, K148, 153–158 (SSGKGQ), 188–191 (EEFL), and E196. An ATP-grasp domain is found at 112-302 (DLAAGELALR…EFELHLRAVL (191 aa)). Mg(2+) contacts are provided by E261 and E273. N(1)-(5-phospho-beta-D-ribosyl)glycinamide-binding positions include D280, K350, and 357-358 (RR).

This sequence belongs to the PurK/PurT family. In terms of assembly, homodimer.

It catalyses the reaction N(1)-(5-phospho-beta-D-ribosyl)glycinamide + formate + ATP = N(2)-formyl-N(1)-(5-phospho-beta-D-ribosyl)glycinamide + ADP + phosphate + H(+). It functions in the pathway purine metabolism; IMP biosynthesis via de novo pathway; N(2)-formyl-N(1)-(5-phospho-D-ribosyl)glycinamide from N(1)-(5-phospho-D-ribosyl)glycinamide (formate route): step 1/1. Its function is as follows. Involved in the de novo purine biosynthesis. Catalyzes the transfer of formate to 5-phospho-ribosyl-glycinamide (GAR), producing 5-phospho-ribosyl-N-formylglycinamide (FGAR). Formate is provided by PurU via hydrolysis of 10-formyl-tetrahydrofolate. The chain is Formate-dependent phosphoribosylglycinamide formyltransferase from Parasynechococcus marenigrum (strain WH8102).